The chain runs to 803 residues: Phenylalanine--tRNA ligase beta subunit (803 aa).

The region spanning 40 to 150 (SNKFYGIVIA…IDAPIGCNFY (111 aa)) is the tRNA-binding domain. The 76-residue stretch at 405–480 (PKIKIIKLHR…RIYGYNHIPK (76 aa)) folds into the B5 domain. Asp458 and Glu468 together coordinate Mg(2+). In terms of domain architecture, FDX-ACB spans 710 to 803 (SKFPKNYRDI…LKKHFNAIFR (94 aa)).

The protein belongs to the phenylalanyl-tRNA synthetase beta subunit family. Type 1 subfamily. In terms of assembly, tetramer of two alpha and two beta subunits. Mg(2+) is required as a cofactor.

The protein localises to the cytoplasm. The catalysed reaction is tRNA(Phe) + L-phenylalanine + ATP = L-phenylalanyl-tRNA(Phe) + AMP + diphosphate + H(+). The protein is Phenylalanine--tRNA ligase beta subunit of Blochmanniella floridana.